A 577-amino-acid chain; its full sequence is Arginine--tRNA ligase (577 aa).

A 'HIGH' region motif is present at residues proline 122 to histidine 132.

It belongs to the class-I aminoacyl-tRNA synthetase family. As to quaternary structure, monomer.

The protein resides in the cytoplasm. It carries out the reaction tRNA(Arg) + L-arginine + ATP = L-arginyl-tRNA(Arg) + AMP + diphosphate. The protein is Arginine--tRNA ligase of Enterobacter sp. (strain 638).